Consider the following 179-residue polypeptide: Ubiquitin-conjugating enzyme E2 C (179 aa).

Positions 1-31 (MASQNRDPVAASVAAARKGAEPSGGAARGPV) are disordered. A2 bears the N-acetylalanine mark. S3 is subject to Phosphoserine. The UBC core domain occupies 30–175 (PVGKRLQQEL…LQETYSKQVS (146 aa)). Residue C114 is the Glycyl thioester intermediate of the active site.

The protein belongs to the ubiquitin-conjugating enzyme family. As to quaternary structure, component of the APC/C complex, composed of at least 14 distinct subunits that assemble into a complex of at least 19 chains with a combined molecular mass of around 1.2 MDa. Within this complex, directly interacts with ANAPC2. Post-translationally, autoubiquitinated by the APC/C complex, leading to its degradation by the proteasome. Its degradation plays a central role in APC/C regulation, allowing cyclin-A accumulation before S phase entry. APC/C substrates inhibit the autoubiquitination of UBE2C/UBCH10 but not its E2 function, hence APC/C remaining active until its substrates have been destroyed.

It catalyses the reaction S-ubiquitinyl-[E1 ubiquitin-activating enzyme]-L-cysteine + [E2 ubiquitin-conjugating enzyme]-L-cysteine = [E1 ubiquitin-activating enzyme]-L-cysteine + S-ubiquitinyl-[E2 ubiquitin-conjugating enzyme]-L-cysteine.. It carries out the reaction S-ubiquitinyl-[E1 ubiquitin-activating enzyme]-L-cysteine + [acceptor protein]-L-lysine = [E1 ubiquitin-activating enzyme]-L-cysteine + N(6)-monoubiquitinyl-[acceptor protein]-L-lysine.. The protein operates within protein modification; protein ubiquitination. Accepts ubiquitin from the E1 complex and catalyzes its covalent attachment to other proteins. In vitro catalyzes 'Lys-11'- and 'Lys-48'-linked polyubiquitination. Acts as an essential factor of the anaphase promoting complex/cyclosome (APC/C), a cell cycle-regulated ubiquitin ligase that controls progression through mitosis. Acts by initiating 'Lys-11'-linked polyubiquitin chains on APC/C substrates, leading to the degradation of APC/C substrates by the proteasome and promoting mitotic exit. This Bos taurus (Bovine) protein is Ubiquitin-conjugating enzyme E2 C (UBE2C).